Here is a 70-residue protein sequence, read N- to C-terminus: Large ribosomal subunit protein bL31 (70 aa).

The protein belongs to the bacterial ribosomal protein bL31 family. Type A subfamily. In terms of assembly, part of the 50S ribosomal subunit.

Binds the 23S rRNA. This Mycoplasma mobile (strain ATCC 43663 / 163K / NCTC 11711) (Mesomycoplasma mobile) protein is Large ribosomal subunit protein bL31.